Consider the following 1070-residue polypeptide: uncharacterized protein (1070 aa).

The 47-residue stretch at 477-523 (LIDTNQLLLRQLQQIVKLGIFNEKKIKEELKANKFNEQVALQILESE) folds into the UBA domain.

This is an uncharacterized protein from Sulfolobus islandicus rod-shaped virus 1 (SIRV-1).